The following is a 202-amino-acid chain: Large ribosomal subunit protein bL9 (202 aa).

The segment at 177–202 (AGEFFDPEAEPDDVAEAGGEQTAEEK) is disordered. Acidic residues predominate over residues 181–191 (FDPEAEPDDVA).

The protein belongs to the bacterial ribosomal protein bL9 family.

Functionally, binds to the 23S rRNA. This Nitrobacter hamburgensis (strain DSM 10229 / NCIMB 13809 / X14) protein is Large ribosomal subunit protein bL9.